The chain runs to 201 residues: Small ribosomal subunit protein uS4c (201 aa).

The disordered stretch occupies residues 20–44; that stretch reads GLTSKRPTVGSELRNQSRSTKKSQY. In terms of domain architecture, S4 RNA-binding spans 89 to 150; it reads MRLDNILFRL…NKKSKTLIQN (62 aa).

This sequence belongs to the universal ribosomal protein uS4 family. As to quaternary structure, part of the 30S ribosomal subunit. Contacts protein S5. The interaction surface between S4 and S5 is involved in control of translational fidelity.

It is found in the plastid. The protein resides in the chloroplast. In terms of biological role, one of the primary rRNA binding proteins, it binds directly to 16S rRNA where it nucleates assembly of the body of the 30S subunit. With S5 and S12 plays an important role in translational accuracy. This chain is Small ribosomal subunit protein uS4c (rps4), found in Lotus japonicus (Lotus corniculatus var. japonicus).